We begin with the raw amino-acid sequence, 360 residues long: Phospho-N-acetylmuramoyl-pentapeptide-transferase (360 aa).

10 helical membrane-spanning segments follow: residues 26–46, 72–92, 94–114, 132–152, 168–188, 199–219, 236–256, 263–283, 288–308, and 338–358; these read AIVS…RMIA, PTMG…LWAY, SNPY…VGFV, WKYF…YMIG, VMPQ…VGTS, GLAI…AWAT, AGEL…FLWF, VFMG…IAVL, FLLV…ILQV, and VIVR…ATLK.

The protein belongs to the glycosyltransferase 4 family. MraY subfamily. The cofactor is Mg(2+).

The protein localises to the cell inner membrane. The catalysed reaction is UDP-N-acetyl-alpha-D-muramoyl-L-alanyl-gamma-D-glutamyl-meso-2,6-diaminopimeloyl-D-alanyl-D-alanine + di-trans,octa-cis-undecaprenyl phosphate = di-trans,octa-cis-undecaprenyl diphospho-N-acetyl-alpha-D-muramoyl-L-alanyl-D-glutamyl-meso-2,6-diaminopimeloyl-D-alanyl-D-alanine + UMP. Its pathway is cell wall biogenesis; peptidoglycan biosynthesis. Functionally, catalyzes the initial step of the lipid cycle reactions in the biosynthesis of the cell wall peptidoglycan: transfers peptidoglycan precursor phospho-MurNAc-pentapeptide from UDP-MurNAc-pentapeptide onto the lipid carrier undecaprenyl phosphate, yielding undecaprenyl-pyrophosphoryl-MurNAc-pentapeptide, known as lipid I. This is Phospho-N-acetylmuramoyl-pentapeptide-transferase from Erwinia tasmaniensis (strain DSM 17950 / CFBP 7177 / CIP 109463 / NCPPB 4357 / Et1/99).